Here is an 80-residue protein sequence, read N- to C-terminus: U6 snRNA-associated Sm-like protein LSm6 (80 aa).

Residues 7 to 79 (TPSDFLKQII…VLYISTQKRR (73 aa)) form the Sm domain. Position 59 is an N6-acetyllysine (Lys-59).

It belongs to the snRNP Sm proteins family. SmF/LSm6 subfamily. As to quaternary structure, component of the precatalytic spliceosome (spliceosome B complex). Component of the U4/U6-U5 tri-snRNP complex, a building block of the precatalytic spliceosome (spliceosome B complex). The U4/U6-U5 tri-snRNP complex is composed of the U4, U6 and U5 snRNAs and at least PRPF3, PRPF4, PRPF6, PRPF8, PRPF31, SNRNP200, TXNL4A, SNRNP40, SNRPB, SNRPD1, SNRPD2, SNRPD3, SNRPE, SNRPF, SNRPG, DDX23, CD2BP2, PPIH, SNU13, EFTUD2, SART1 and USP39, plus LSM2, LSM3, LSM4, LSM5, LSM6, LSM7 and LSM8. LSM2, LSM3, LSM4, LSM5, LSM6, LSM7 and LSM8 form a heptameric, ring-shaped subcomplex (the LSM2-8 complex) that is part of the U4/U6-U5 tri-snRNP complex and the precatalytic spliceosome. Component of the heptameric LSM1-LSM7 complex, which consists of LSM1, LSM2, LSM3, LSM4, LSM5, LSM6 and LSM7.

The protein localises to the cytoplasm. It is found in the nucleus. Functionally, plays a role in pre-mRNA splicing as component of the U4/U6-U5 tri-snRNP complex that is involved in spliceosome assembly, and as component of the precatalytic spliceosome (spliceosome B complex). The heptameric LSM2-8 complex binds specifically to the 3'-terminal U-tract of U6 snRNA. Component of LSm protein complexes, which are involved in RNA processing and may function in a chaperone-like manner, facilitating the efficient association of RNA processing factors with their substrates. Component of the cytoplasmic LSM1-LSM7 complex, which is thought to be involved in mRNA degradation by activating the decapping step in the 5'-to-3' mRNA decay pathway. This chain is U6 snRNA-associated Sm-like protein LSm6 (LSM6), found in Homo sapiens (Human).